Consider the following 544-residue polypeptide: CTP synthase (544 aa).

Residues 1-267 form an amidoligase domain region; sequence MAKFVFITGG…AQRVLQILNL (267 aa). Position 13 (Ser-13) interacts with CTP. Ser-13 lines the UTP pocket. 14-19 lines the ATP pocket; sequence SIGKGI. Tyr-54 contacts L-glutamine. Asp-71 provides a ligand contact to ATP. Mg(2+)-binding residues include Asp-71 and Glu-141. CTP contacts are provided by residues 148–150, 188–193, and Lys-224; these read DIE and KTKPTQ. UTP is bound by residues 188 to 193 and Lys-224; that span reads KTKPTQ. Positions 292-534 constitute a Glutamine amidotransferase type-1 domain; it reads EIAIVGKYVR…IEAALRSRSR (243 aa). Gly-354 serves as a coordination point for L-glutamine. The active-site Nucleophile; for glutamine hydrolysis is Cys-381. L-glutamine-binding positions include 382–385, Glu-405, and Arg-462; that span reads LGMQ. Residues His-507 and Glu-509 contribute to the active site.

This sequence belongs to the CTP synthase family. In terms of assembly, homotetramer.

It carries out the reaction UTP + L-glutamine + ATP + H2O = CTP + L-glutamate + ADP + phosphate + 2 H(+). The catalysed reaction is L-glutamine + H2O = L-glutamate + NH4(+). It catalyses the reaction UTP + NH4(+) + ATP = CTP + ADP + phosphate + 2 H(+). It participates in pyrimidine metabolism; CTP biosynthesis via de novo pathway; CTP from UDP: step 2/2. Allosterically activated by GTP, when glutamine is the substrate; GTP has no effect on the reaction when ammonia is the substrate. The allosteric effector GTP functions by stabilizing the protein conformation that binds the tetrahedral intermediate(s) formed during glutamine hydrolysis. Inhibited by the product CTP, via allosteric rather than competitive inhibition. In terms of biological role, catalyzes the ATP-dependent amination of UTP to CTP with either L-glutamine or ammonia as the source of nitrogen. Regulates intracellular CTP levels through interactions with the four ribonucleotide triphosphates. The chain is CTP synthase from Synechococcus sp. (strain JA-3-3Ab) (Cyanobacteria bacterium Yellowstone A-Prime).